Reading from the N-terminus, the 254-residue chain is Triosephosphate isomerase (254 aa).

A substrate-binding site is contributed by 10–12 (NWK). Catalysis depends on H99, which acts as the Electrophile. E169 functions as the Proton acceptor in the catalytic mechanism. Substrate is bound by residues G175, S215, and 236–237 (GG).

It belongs to the triosephosphate isomerase family. As to quaternary structure, homodimer.

It is found in the cytoplasm. It carries out the reaction D-glyceraldehyde 3-phosphate = dihydroxyacetone phosphate. The protein operates within carbohydrate biosynthesis; gluconeogenesis. It functions in the pathway carbohydrate degradation; glycolysis; D-glyceraldehyde 3-phosphate from glycerone phosphate: step 1/1. In terms of biological role, involved in the gluconeogenesis. Catalyzes stereospecifically the conversion of dihydroxyacetone phosphate (DHAP) to D-glyceraldehyde-3-phosphate (G3P). This chain is Triosephosphate isomerase, found in Chlamydia caviae (strain ATCC VR-813 / DSM 19441 / 03DC25 / GPIC) (Chlamydophila caviae).